We begin with the raw amino-acid sequence, 79 residues long: EAMZP30-47 protein (79 aa).

Low complexity predominate over residues 1–12; sequence HAASPRGRPQQR. The segment at 1 to 47 is disordered; that stretch reads HAASPRGRPQQRSSRHGAEGPDTTRRGSCCSSSSSCCRPSTPRHPHN. The segment covering 16–25 has biased composition (basic and acidic residues); the sequence is HGAEGPDTTR. Over residues 28 to 37 the composition is skewed to low complexity; that stretch reads SCCSSSSSCC.

Its subcellular location is the membrane. It is found in the cell membrane. The protein resides in the cytoplasmic vesicle. It localises to the secretory vesicle. The protein localises to the rhoptry. In Eimeria acervulina (Coccidian parasite), this protein is EAMZP30-47 protein (CMC17).